Consider the following 409-residue polypeptide: NADH-ubiquinone oxidoreductase chain 4 (409 aa).

A run of 13 helical transmembrane segments spans residues 10–30 (LWLFKPIYFLLFTVMFSFLIF), 44–64 (SYSFILLIVMSLFILGIIVIS), 76–96 (ILVFICIIFFIPSNMMMLYMF), 98–118 (ELSMFPILVMILGYGSQIEKI), 120–140 (SSYYLMFYAAFCSFPFLFVYF), 160–180 (FFILSLSFMMKFPIYFLHLWL), 194–214 (LLAGLLLKLGTAGFLRILGSL), 221–241 (VWILIAFLGMILGSFCCVFQS), 245–265 (ALAAYSSVTHMSFLLLSLVFI), 271–291 (ISSVMLMLAHGYTSTLMFYLI), 305–325 (FMSSFFSSSMIMGILFSVVFL), 353–373 (MFVMIFIYFVVSFYYSLFLIT), and 389–409 (VGFSAPLVLMMYNVFWLSVFY).

The protein belongs to the complex I subunit 4 family.

It is found in the mitochondrion membrane. It catalyses the reaction a ubiquinone + NADH + 5 H(+)(in) = a ubiquinol + NAD(+) + 4 H(+)(out). Its function is as follows. Core subunit of the mitochondrial membrane respiratory chain NADH dehydrogenase (Complex I) that is believed to belong to the minimal assembly required for catalysis. Complex I functions in the transfer of electrons from NADH to the respiratory chain. The immediate electron acceptor for the enzyme is believed to be ubiquinone. The polypeptide is NADH-ubiquinone oxidoreductase chain 4 (Caenorhabditis elegans).